Reading from the N-terminus, the 447-residue chain is Cysteine--tRNA ligase (447 aa).

Residue C28 participates in Zn(2+) binding. The 'HIGH' region signature appears at 30–40 (PTVYNYIHVGN). Zn(2+) contacts are provided by C211, H236, and E240. The 'KMSKS' region signature appears at 268–272 (KMSKS). K271 serves as a coordination point for ATP.

This sequence belongs to the class-I aminoacyl-tRNA synthetase family. As to quaternary structure, monomer. It depends on Zn(2+) as a cofactor.

The protein localises to the cytoplasm. It catalyses the reaction tRNA(Cys) + L-cysteine + ATP = L-cysteinyl-tRNA(Cys) + AMP + diphosphate. This is Cysteine--tRNA ligase from Streptococcus pneumoniae serotype 4 (strain ATCC BAA-334 / TIGR4).